Consider the following 539-residue polypeptide: Glucans biosynthesis protein D (539 aa).

A signal peptide (tat-type signal) is located at residues 1-29 (MNRRNLLKASMALAAYGSVSASGLYAARA).

Belongs to the OpgD/OpgG family. Predicted to be exported by the Tat system. The position of the signal peptide cleavage has not been experimentally proven.

It is found in the periplasm. It functions in the pathway glycan metabolism; osmoregulated periplasmic glucan (OPG) biosynthesis. Functionally, probably involved in the control of the structural glucose backbone of osmoregulated periplasmic glucans (OPGs). The chain is Glucans biosynthesis protein D from Pseudomonas savastanoi pv. phaseolicola (strain 1448A / Race 6) (Pseudomonas syringae pv. phaseolicola (strain 1448A / Race 6)).